A 565-amino-acid polypeptide reads, in one-letter code: Frizzled-2 (565 aa).

The N-terminal stretch at 1–23 is a signal peptide; sequence MRPRSALPRLLLPLLLLPAAGPA. Residues 24–247 are Extracellular-facing; that stretch reads QFHGEKGISI…QEETRFARLW (224 aa). One can recognise an FZ domain in the interval 34 to 153; that stretch reads PDHGFCQPIS…HGAEQICVGQ (120 aa). Disulfide bonds link Cys-39/Cys-100, Cys-47/Cys-93, Cys-84/Cys-121, Cys-110/Cys-150, and Cys-114/Cys-138. Asn-53 carries N-linked (GlcNAc...) asparagine glycosylation. Asn-154 carries N-linked (GlcNAc...) asparagine glycosylation. The tract at residues 160-189 is disordered; it reads APALLTTAPPPGLQPGAGGTPGGPGGGGAP. The span at 174–188 shows a compositional bias: gly residues; the sequence is PGAGGTPGGPGGGGA. Residues 248–268 form a helical membrane-spanning segment; that stretch reads ILTWSVLCCASTFFTVTTYLV. Residues 269–279 lie on the Cytoplasmic side of the membrane; the sequence is DMQRFRYPERP. The chain crosses the membrane as a helical span at residues 280 to 300; that stretch reads IIFLSGCYTMVSVAYIAGFVL. Topologically, residues 301–327 are extracellular; the sequence is QERVVCNERFSEDGYRTVVQGTKKEGC. The chain crosses the membrane as a helical span at residues 328 to 348; the sequence is TILFMMLYFFSMASSIWWVIL. Topologically, residues 349–370 are cytoplasmic; that stretch reads SLTWFLAAGMKWGHEAIEANSQ. A helical transmembrane segment spans residues 371-391; sequence YFHLAAWAVPAVKTITILAMG. At 392–414 the chain is on the extracellular side; the sequence is QIDGDLLSGVCFVGLNSLDPLRG. The chain crosses the membrane as a helical span at residues 415–435; sequence FVLAPLFVYLFIGTSFLLAGF. Residues 436 to 461 lie on the Cytoplasmic side of the membrane; that stretch reads VSLFRIRTIMKHDGTKTEKLERLMVR. A helical transmembrane segment spans residues 462–482; sequence IGVFSVLYTVPATIVIACYFY. Residues 483–519 are Extracellular-facing; it reads EQAFREHWERSWVSQHCKSLAIPCPAHYTPRMSPDFT. The chain crosses the membrane as a helical span at residues 520–540; sequence VYMIKYLMTLIVGITSGFWIW. The Cytoplasmic portion of the chain corresponds to 541 to 565; that stretch reads SGKTLHSWRKFYTRLTNSRHGETTV. The Lys-Thr-X-X-X-Trp motif, mediates interaction with the PDZ domain of Dvl family members motif lies at 543–548; sequence KTLHSW. The PDZ-binding signature appears at 563 to 565; the sequence is TTV.

The protein belongs to the G-protein coupled receptor Fz/Smo family. As to quaternary structure, (Microbial infection) Interacts with C.difficile toxin TcdB; frizzled receptors constitute the major host receptors for TcdB in the colonic epithelium. Post-translationally, ubiquitinated by ZNRF3, leading to its degradation by the proteasome. In terms of tissue distribution, widely expressed. In the adult, mainly found in heart, placenta, skeletal muscle, lung, kidney, pancreas, prostate, testis, ovary and colon. In the fetus, expressed in brain, lung and kidney. Low levels in fetal liver.

It is found in the membrane. The protein resides in the cell membrane. Its function is as follows. Receptor for Wnt proteins. Most of frizzled receptors are coupled to the beta-catenin canonical signaling pathway, which leads to the activation of disheveled proteins, inhibition of GSK-3 kinase, nuclear accumulation of beta-catenin and activation of Wnt target genes. A second signaling pathway involving PKC and calcium fluxes has been seen for some family members, but it is not yet clear if it represents a distinct pathway or if it can be integrated in the canonical pathway, as PKC seems to be required for Wnt-mediated inactivation of GSK-3 kinase. Both pathways seem to involve interactions with G-proteins. May be involved in transduction and intercellular transmission of polarity information during tissue morphogenesis and/or in differentiated tissues. (Microbial infection) Acts as a receptor for C.difficile toxin TcdB in the colonic epithelium. TcdB occupies the binding site for Wnt-adducted palmitoleate in frizzled receptors and TcdB-binding prevents Wnt-binding and downstream Wnt signaling. The polypeptide is Frizzled-2 (FZD2) (Homo sapiens (Human)).